The primary structure comprises 95 residues: MSVDAVTVRKIAHLARIKVNDADVPHVQEELNAILAFVEQLASVDVEGVEPMTSVMPMPMTKREDIVTDGGIADAIVANAPATEDHFFVVPKVVE.

This sequence belongs to the GatC family. Heterotrimer of A, B and C subunits.

It carries out the reaction L-glutamyl-tRNA(Gln) + L-glutamine + ATP + H2O = L-glutaminyl-tRNA(Gln) + L-glutamate + ADP + phosphate + H(+). The catalysed reaction is L-aspartyl-tRNA(Asn) + L-glutamine + ATP + H2O = L-asparaginyl-tRNA(Asn) + L-glutamate + ADP + phosphate + 2 H(+). Allows the formation of correctly charged Asn-tRNA(Asn) or Gln-tRNA(Gln) through the transamidation of misacylated Asp-tRNA(Asn) or Glu-tRNA(Gln) in organisms which lack either or both of asparaginyl-tRNA or glutaminyl-tRNA synthetases. The reaction takes place in the presence of glutamine and ATP through an activated phospho-Asp-tRNA(Asn) or phospho-Glu-tRNA(Gln). This chain is Aspartyl/glutamyl-tRNA(Asn/Gln) amidotransferase subunit C, found in Beijerinckia indica subsp. indica (strain ATCC 9039 / DSM 1715 / NCIMB 8712).